Here is a 344-residue protein sequence, read N- to C-terminus: Trace amine-associated receptor 8a (344 aa).

Topologically, residues 1–33 (MTSNFSQAPLQLCYENVNASCIKTPYSPGLRVL) are extracellular. 2 N-linked (GlcNAc...) asparagine glycosylation sites follow: N4 and N18. 2 disulfide bridges follow: C21–C185 and C96–C189. The helical transmembrane segment at 34-54 (LYMVFGFGAVLAVCGNLLVVI) threads the bilayer. Topologically, residues 55–67 (SVLHFKQLHSPAN) are cytoplasmic. Residues 68–88 (FLIASLASADFLVGISVMPFS) form a helical membrane-spanning segment. Over 89-102 (MVRSIESCWYFGDT) the chain is Extracellular. A helical transmembrane segment spans residues 103–127 (FCSLHSCCDAAFCYSSLFHLCFISV). The Cytoplasmic portion of the chain corresponds to 128 to 146 (DRYIAVTDPLVYPTKFTVS). A helical transmembrane segment spans residues 147-167 (VSGICISISWILPLVYSSAVF). The Extracellular portion of the chain corresponds to 168 to 196 (YTGISATGIENLVSALNCVGGCQIVVNQD). A helical transmembrane segment spans residues 197 to 217 (WVLIDFLLFLIPTLVMIILYS). The Cytoplasmic portion of the chain corresponds to 218–260 (KIFLVAKQQAVKIETSISGSKGESSLESHKARVAKRERKAAKT). The chain crosses the membrane as a helical span at residues 261–281 (LGVTVVAFMVSWLPYTIDTLI). At 282–291 (DAFMGFITPA) the chain is on the extracellular side. A helical membrane pass occupies residues 292–314 (YVYEICCWSAYYNSAMNPLIYAF). Topologically, residues 315 to 344 (FYPWFRKAIKLILSGEILKSHSSTMSLFSE) are cytoplasmic.

The protein belongs to the G-protein coupled receptor 1 family.

It localises to the cell membrane. Olfactory receptor activated by trace amines. Trace amine compounds are enriched in animal body fluids and act on trace amine-associated receptors (TAARs) to elicit both intraspecific and interspecific innate behaviors. Ligand-binding causes a conformation change that triggers signaling via G(s)-class of G alpha proteins (GNAL or GNAS). The chain is Trace amine-associated receptor 8a from Rattus norvegicus (Rat).